A 480-amino-acid chain; its full sequence is Histone deacetylase 1 (480 aa).

Residues 9 to 321 form a histone deacetylase region; it reads RKVCYYYDGD…WTYETAVALD (313 aa). 2 residues coordinate 1D-myo-inositol 1,4,5,6-tetrakisphosphate: G27 and K31. Residue H141 is part of the active site. Zn(2+) contacts are provided by D176, H178, and D264. Residue R270 coordinates 1D-myo-inositol 1,4,5,6-tetrakisphosphate. Positions 376-480 are disordered; that stretch reads APGVQMQPIP…KGVKEETKST (105 aa). The segment covering 388 to 400 has biased composition (acidic residues); sequence AVQEDSGDEEEED. Over residues 401–416 the composition is skewed to basic and acidic residues; it reads PEKRISIRNSDKRISC. Residues 417-427 show a composition bias toward acidic residues; that stretch reads DEEFSDSEDEG. A compositionally biased stretch (basic and acidic residues) spans 455–480; it reads KDEKEEEKAKEEKAEPKGVKEETKST.

It belongs to the histone deacetylase family. HD type 1 subfamily. The cofactor is Zn(2+).

Its subcellular location is the nucleus. It catalyses the reaction N(6)-acetyl-L-lysyl-[histone] + H2O = L-lysyl-[histone] + acetate. The catalysed reaction is N(6)-acetyl-L-lysyl-[protein] + H2O = L-lysyl-[protein] + acetate. It carries out the reaction N(6)-(2E)-butenoyl-L-lysyl-[protein] + H2O = (2E)-2-butenoate + L-lysyl-[protein]. The enzyme catalyses N(6)-[(S)-lactoyl]-L-lysyl-[protein] + H2O = (S)-lactate + L-lysyl-[protein]. With respect to regulation, inositol tetraphosphate (1D-myo-inositol 1,4,5,6-tetrakisphosphate) may act as an intermolecular glue between HDAC1 and N-Cor repressor complex components. Functionally, histone deacetylase that catalyzes the deacetylation of lysine residues on the N-terminal part of the core histones (H2A, H2B, H3 and H4). Histone deacetylation gives a tag for epigenetic repression and plays an important role in transcriptional regulation, cell cycle progression and developmental events. Histone deacetylases act via the formation of large multiprotein complexes. Also functions as a deacetylase for non-histone proteins. In addition to protein deacetylase activity, also has protein-lysine deacylase activity: acts as a protein decrotonylase and delactylase by mediating decrotonylation ((2E)-butenoyl) and delactylation (lactoyl) of histones, respectively. This chain is Histone deacetylase 1 (HDAC1), found in Gallus gallus (Chicken).